A 696-amino-acid chain; its full sequence is DNA ligase (696 aa).

NAD(+) contacts are provided by residues 55–59 (DYEFD), 105–106 (SL), and glutamate 137. Lysine 139 serves as the catalytic N6-AMP-lysine intermediate. Residues arginine 160, glutamate 194, lysine 310, and lysine 334 each contribute to the NAD(+) site. The Zn(2+) site is built by cysteine 428, cysteine 431, cysteine 446, and cysteine 451. A BRCT domain is found at 615 to 696 (NVNPNFVGKN…EFIELKDKFD (82 aa)).

Belongs to the NAD-dependent DNA ligase family. LigA subfamily. Mg(2+) is required as a cofactor. It depends on Mn(2+) as a cofactor.

The enzyme catalyses NAD(+) + (deoxyribonucleotide)n-3'-hydroxyl + 5'-phospho-(deoxyribonucleotide)m = (deoxyribonucleotide)n+m + AMP + beta-nicotinamide D-nucleotide.. Functionally, DNA ligase that catalyzes the formation of phosphodiester linkages between 5'-phosphoryl and 3'-hydroxyl groups in double-stranded DNA using NAD as a coenzyme and as the energy source for the reaction. It is essential for DNA replication and repair of damaged DNA. In Fusobacterium nucleatum subsp. nucleatum (strain ATCC 25586 / DSM 15643 / BCRC 10681 / CIP 101130 / JCM 8532 / KCTC 2640 / LMG 13131 / VPI 4355), this protein is DNA ligase.